Here is a 246-residue protein sequence, read N- to C-terminus: MKEFITKHRDKFQKISAISGAGISAESGIPTFRGSEGLWKNFRAEDLATPQAFSKNPKLVWEWYLWRRNIIETKRPNPGHFALVELERIHPDFFLITQNVDGLHSQAGSKKLTEIHGNIFINRCISCGQESKETISENTTPLPPQCQNCNSFLRPGVVWFGESYDDFKLNFSIQRMKHTDLLLVLGTSGSVSMPVYLAQIAKDSGALLVEINPERSSFSSSVDLFLQGKTGEVLPELIREILDNPS.

In terms of domain architecture, Deacetylase sirtuin-type spans methionine 1–proline 245. Glycine 20 to tryptophan 39 provides a ligand contact to NAD(+). Substrate-binding residues include tyrosine 64 and arginine 67. Glutamine 98 to aspartate 101 provides a ligand contact to NAD(+). Histidine 116 (proton acceptor) is an active-site residue. 4 residues coordinate Zn(2+): cysteine 124, cysteine 127, cysteine 146, and cysteine 149. Residues glycine 186–serine 188, asparagine 212–glutamate 214, and threonine 230 each bind NAD(+).

This sequence belongs to the sirtuin family. Class III subfamily. Requires Zn(2+) as cofactor.

It is found in the cytoplasm. It carries out the reaction N(6)-acetyl-L-lysyl-[protein] + NAD(+) + H2O = 2''-O-acetyl-ADP-D-ribose + nicotinamide + L-lysyl-[protein]. The catalysed reaction is N(6)-succinyl-L-lysyl-[protein] + NAD(+) + H2O = 2''-O-succinyl-ADP-D-ribose + nicotinamide + L-lysyl-[protein]. Its function is as follows. NAD-dependent lysine deacetylase and desuccinylase that specifically removes acetyl and succinyl groups on target proteins. Modulates the activities of several proteins which are inactive in their acylated form. This Leptospira interrogans serogroup Icterohaemorrhagiae serovar copenhageni (strain Fiocruz L1-130) protein is NAD-dependent protein deacylase.